The primary structure comprises 578 residues: Cholesterol oxidase (578 aa).

FAD contacts are provided by G15, E34, G85, A90, and V230. The Proton acceptor role is filled by H470. G503 serves as a coordination point for FAD. The disordered stretch occupies residues 529 to 551; sequence WPNKGETDRRPPQGEPYRRLAPI. Positions 533–546 are enriched in basic and acidic residues; that stretch reads GETDRRPPQGEPYR.

It belongs to the GMC oxidoreductase family. The cofactor is FAD.

The protein localises to the secreted. It catalyses the reaction cholesterol + O2 = cholest-5-en-3-one + H2O2. It carries out the reaction cholest-5-en-3-one = cholest-4-en-3-one. It participates in steroid metabolism; cholesterol degradation. Its function is as follows. Bifunctional enzyme that catalyzes the oxidation and isomerization of cholesterol to cholestenone (cholest-4-en-3-one), an initial step in the cholesterol degradation process. Contributes to virulence. The sequence is that of Cholesterol oxidase (choD) from Mycobacterium tuberculosis (strain CDC 1551 / Oshkosh).